Consider the following 103-residue polypeptide: Co-chaperonin GroES (103 aa).

This sequence belongs to the GroES chaperonin family. Heptamer of 7 subunits arranged in a ring. Interacts with the chaperonin GroEL.

It is found in the cytoplasm. In terms of biological role, together with the chaperonin GroEL, plays an essential role in assisting protein folding. The GroEL-GroES system forms a nano-cage that allows encapsulation of the non-native substrate proteins and provides a physical environment optimized to promote and accelerate protein folding. GroES binds to the apical surface of the GroEL ring, thereby capping the opening of the GroEL channel. The sequence is that of Co-chaperonin GroES from Synechococcus sp. (strain JA-3-3Ab) (Cyanobacteria bacterium Yellowstone A-Prime).